The sequence spans 216 residues: Small ribosomal subunit protein uS3c (216 aa).

In terms of domain architecture, KH type-2 spans 43–118 (INNYVKKNMR…KLNITITRIE (76 aa)).

The protein belongs to the universal ribosomal protein uS3 family. In terms of assembly, part of the 30S ribosomal subunit.

The protein localises to the plastid. In Cuscuta reflexa (Southern Asian dodder), this protein is Small ribosomal subunit protein uS3c (rps3).